The primary structure comprises 31 residues: Photosystem I reaction center subunit XII (31 aa).

A helical membrane pass occupies residues 7–26 (QVYIALLTALIPAFFALKLG).

It belongs to the PsaM family.

Its subcellular location is the plastid. The protein localises to the chloroplast thylakoid membrane. This chain is Photosystem I reaction center subunit XII, found in Euglena viridis (Cercaria viridis).